We begin with the raw amino-acid sequence, 206 residues long: Dephospho-CoA kinase (206 aa).

One can recognise a DPCK domain in the interval Ile-4 to Lys-204. Gly-12–Thr-17 is a binding site for ATP.

It belongs to the CoaE family.

Its subcellular location is the cytoplasm. It carries out the reaction 3'-dephospho-CoA + ATP = ADP + CoA + H(+). It functions in the pathway cofactor biosynthesis; coenzyme A biosynthesis; CoA from (R)-pantothenate: step 5/5. Catalyzes the phosphorylation of the 3'-hydroxyl group of dephosphocoenzyme A to form coenzyme A. This is Dephospho-CoA kinase from Haemophilus influenzae (strain ATCC 51907 / DSM 11121 / KW20 / Rd).